Here is a 115-residue protein sequence, read N- to C-terminus: NADH-ubiquinone oxidoreductase chain 3 (115 aa).

3 helical membrane-spanning segments follow: residues 3–23, 55–75, and 84–104; these read LMIT…IAFW, FFLV…LLPL, and LNTM…SLAY.

The protein belongs to the complex I subunit 3 family. In terms of assembly, core subunit of respiratory chain NADH dehydrogenase (Complex I) which is composed of 45 different subunits. Interacts with TMEM186. Interacts with TMEM242.

It localises to the mitochondrion inner membrane. The catalysed reaction is a ubiquinone + NADH + 5 H(+)(in) = a ubiquinol + NAD(+) + 4 H(+)(out). Core subunit of the mitochondrial membrane respiratory chain NADH dehydrogenase (Complex I) which catalyzes electron transfer from NADH through the respiratory chain, using ubiquinone as an electron acceptor. Essential for the catalytic activity of complex I. The polypeptide is NADH-ubiquinone oxidoreductase chain 3 (Ovis aries (Sheep)).